The chain runs to 426 residues: Enolase 2 (426 aa).

A (2R)-2-phosphoglycerate-binding site is contributed by Q163. The active-site Proton donor is E205. The Mg(2+) site is built by D242, E285, and D312. Residues K337, R366, S367, and K388 each coordinate (2R)-2-phosphoglycerate. K337 (proton acceptor) is an active-site residue.

The protein belongs to the enolase family. Requires Mg(2+) as cofactor.

The protein resides in the cytoplasm. It is found in the secreted. Its subcellular location is the cell surface. The enzyme catalyses (2R)-2-phosphoglycerate = phosphoenolpyruvate + H2O. Its pathway is carbohydrate degradation; glycolysis; pyruvate from D-glyceraldehyde 3-phosphate: step 4/5. Its function is as follows. Catalyzes the reversible conversion of 2-phosphoglycerate (2-PG) into phosphoenolpyruvate (PEP). It is essential for the degradation of carbohydrates via glycolysis. The polypeptide is Enolase 2 (Methanospirillum hungatei JF-1 (strain ATCC 27890 / DSM 864 / NBRC 100397 / JF-1)).